The following is a 66-amino-acid chain: Large ribosomal subunit protein bL31 (66 aa).

Zn(2+)-binding residues include C16, C18, C36, and C39.

It belongs to the bacterial ribosomal protein bL31 family. Type A subfamily. As to quaternary structure, part of the 50S ribosomal subunit. Requires Zn(2+) as cofactor.

Functionally, binds the 23S rRNA. The chain is Large ribosomal subunit protein bL31 from Campylobacter hominis (strain ATCC BAA-381 / DSM 21671 / CCUG 45161 / LMG 19568 / NCTC 13146 / CH001A).